Here is a 95-residue protein sequence, read N- to C-terminus: Putative RelE-like toxin protein (95 aa).

Belongs to the RelE toxin family.

Its function is as follows. Toxic component of a type II toxin-antitoxin (TA) system. This is Putative RelE-like toxin protein from Escherichia coli.